The sequence spans 902 residues: Respiratory nitrate reductase alpha chain (902 aa).

Residues His29, Cys33, and Cys37 each coordinate [4Fe-4S] cluster.

It belongs to the prokaryotic molybdopterin-containing oxidoreductase family. As to quaternary structure, heterotrimer composed of an alpha, a beta and a gamma chain. Alpha and beta are catalytic chains; gamma chains are involved in binding the enzyme complex to the cytoplasmic membrane. [4Fe-4S] cluster is required as a cofactor. Requires Mo-bis(molybdopterin guanine dinucleotide) as cofactor.

The protein resides in the cell membrane. Its subcellular location is the cytoplasm. The catalysed reaction is nitrate + a quinol = a quinone + nitrite + H2O. Inhibited by micromolar concentrations of azide. In terms of biological role, the nitrate reductase enzyme complex allows Bradyrhizobium sp. USDA 3045 to use nitrate as an electron acceptor during anaerobic growth. The alpha chain is the actual site of nitrate reduction. This Bradyrhizobium sp protein is Respiratory nitrate reductase alpha chain (narG).